The following is an 826-amino-acid chain: Dolichyl-diphosphooligosaccharide--protein glycosyltransferase subunit STT3B (826 aa).

Positions 1–60 are disordered; it reads MAEPSAPESKHKSSLNSSPWSGLMALGNSRHGHHGPGAQCAHKAAGGAAPPKPAPAGLSG. At Ala-2 the chain carries N-acetylalanine. Residues 2–41 are Cytoplasmic-facing; the sequence is AEPSAPESKHKSSLNSSPWSGLMALGNSRHGHHGPGAQCA. Residues Ser-13, Ser-18, and Ser-29 each carry the phosphoserine modification. Residues 37–49 show a composition bias toward low complexity; the sequence is GAQCAHKAAGGAA. Residues 42 to 86 form a helical membrane-spanning segment; the sequence is HKAAGGAAPPKPAPAGLSGGLSQPAGWQSLLSFTILFLAWLAGFS. Over 87–173 the chain is Lumenal; it reads SRLFAVIRFE…VHIRDVCVFL (87 aa). The DXD motif 1 motif lies at 101-103; the sequence is EFD. Asp-103 provides a ligand contact to Mn(2+). Residues 174 to 192 form a helical membrane-spanning segment; that stretch reads APTFSGLTSISTFLLTREL. The Cytoplasmic segment spans residues 193–194; it reads WN. Residues 195 to 212 traverse the membrane as a helical segment; it reads QGAGLLAACFIAIVPGYI. Residues 213-223 lie on the Lumenal side of the membrane; that stretch reads SRSVAGSFDNE. The Mn(2+) site is built by Asp-221 and Glu-223. Residues 221-223 carry the DXD motif 2 motif; it reads DNE. A helical membrane pass occupies residues 224 to 243; that stretch reads GIAIFALQFTYYLWVKSVKT. Over 244–245 the chain is Cytoplasmic; that stretch reads GS. A helical membrane pass occupies residues 246 to 260; it reads VFWTMCCCLSYFYMV. Residues 261–265 lie on the Lumenal side of the membrane; it reads SAWGG. A helical membrane pass occupies residues 266 to 282; that stretch reads YVFIINLIPLHVFVLLL. Over 283–287 the chain is Cytoplasmic; it reads MQRYS. The chain crosses the membrane as a helical span at residues 288 to 313; that stretch reads KRVYIAYSTFYIVGLILSMQIPFVGF. Residues 314–321 are Lumenal-facing; it reads QPIRTSEH. Residues 322 to 341 form a helical membrane-spanning segment; it reads MAAAGVFALLQAYAFLQYLR. Residues 342-350 are Cytoplasmic-facing; the sequence is DRLTKQEFQ. Residues 351–371 form a helical membrane-spanning segment; the sequence is TLFFLGVSLAAGAVFLSVIYL. The Lumenal segment spans residues 372–410; sequence TYTGYIAPWSGRFYSLWDTGYAKIHIPIIASVSEHQPTT. Residues 402–405 carry the SVSE motif motif; that stretch reads SVSE. Residues 411–433 form a helical membrane-spanning segment; the sequence is WVSFFFDLHILVCTFPAGLWFCI. Over 434–439 the chain is Cytoplasmic; that stretch reads KNINDE. A helical transmembrane segment spans residues 440 to 456; the sequence is RVFVALYAISAVYFAGV. Residues 457 to 460 lie on the Lumenal side of the membrane; that stretch reads MVRL. Residue Arg-459 participates in dolichyl diphosphooligosaccharide binding. The helical transmembrane segment at 461–482 threads the bilayer; the sequence is MLTLTPVVCMLSAIAFSNVFEH. At 483-526 the chain is on the cytoplasmic side; the sequence is YLGDDMKRENPPVEDSSDEDDKRNQGNLYDKAGKVRKHATEQEK. The interval 490 to 509 is disordered; it reads RENPPVEDSSDEDDKRNQGN. Ser-498 and Ser-499 each carry phosphoserine. Residues 527 to 552 form a helical membrane-spanning segment; sequence TEEGLGPNIKSIVTMLMLMLLMMFAV. Residues 553–826 lie on the Lumenal side of the membrane; sequence HCTWVTSNAY…KGKKISKKTV (274 aa). Residues 604 to 606 are interacts with target acceptor peptide in protein substrate; the sequence is WWD. Residues 604–608 carry the WWDYG motif motif; that stretch reads WWDYG. Dolichyl diphosphooligosaccharide is bound at residue Tyr-609. Residues Asn-616 and Asn-623 are each glycosylated (N-linked (GlcNAc...) asparagine). A glycan (N-linked (GlcNAc...) (high mannose) asparagine) is linked at Asn-627. N-linked (GlcNAc...) asparagine glycosylation occurs at Asn-641. A DK motif motif is present at residues 671–678; it reads DINKFLWM.

The protein belongs to the STT3 family. As to quaternary structure, component of the oligosaccharyltransferase (OST) complex. There are 2 OST complexes, OST-A and OST-B, which contain STT3A or STT3B as catalytic subunit, respectively. OST-A and OST-B contain common core subunits RPN1, RPN2, OST48, OST4, DAD1 and TMEM258, and OST-B contains either MAGT1 or TUSC3 as specific accessory subunit. Mg(2+) is required as a cofactor. The cofactor is Mn(2+). Expressed in heart, brain, placenta, lung, liver, muscle, kidney and pancreas. Expressed in skin fibroblasts (at protein level).

Its subcellular location is the endoplasmic reticulum. It localises to the endoplasmic reticulum membrane. The catalysed reaction is a di-trans,poly-cis-dolichyl diphosphooligosaccharide + L-asparaginyl-[protein] = N(4)-(oligosaccharide-(1-&gt;4)-N-acetyl-beta-D-glucosaminyl-(1-&gt;4)-N-acetyl-beta-D-glucosaminyl)-L-asparaginyl-[protein] + a di-trans,poly-cis-dolichyl diphosphate + H(+). The protein operates within protein modification; protein glycosylation. Its function is as follows. Catalytic subunit of the oligosaccharyl transferase (OST) complex that catalyzes the initial transfer of a defined glycan (Glc(3)Man(9)GlcNAc(2) in eukaryotes) from the lipid carrier dolichol-pyrophosphate to an asparagine residue within an Asn-X-Ser/Thr consensus motif in nascent polypeptide chains, the first step in protein N-glycosylation. N-glycosylation occurs cotranslationally and the complex associates with the Sec61 complex at the channel-forming translocon complex that mediates protein translocation across the endoplasmic reticulum (ER). All subunits are required for a maximal enzyme activity. This subunit contains the active site and the acceptor peptide and donor lipid-linked oligosaccharide (LLO) binding pockets. STT3B is present in a small subset of OST complexes (OST-B) and mediates both cotranslational and post-translational N-glycosylation of target proteins: STT3B-containing complexes are required for efficient post-translational glycosylation and while they are less competent than STT3A-containing complexes for cotranslational glycosylation, they have the ability to mediate glycosylation of some nascent sites that are not accessible for STT3A. STT3B-containing complexes also act post-translationally and mediate modification of skipped glycosylation sites in unfolded proteins. Plays a role in ER-associated degradation (ERAD) pathway that mediates ubiquitin-dependent degradation of misfolded endoplasmic reticulum proteins by mediating N-glycosylation of unfolded proteins, which are then recognized by the ERAD pathway and targeted for degradation. Mediates glycosylation of the disease variant AMYL-TTR 'Asp-38' of TTR at 'Asn-118', leading to its degradation. The polypeptide is Dolichyl-diphosphooligosaccharide--protein glycosyltransferase subunit STT3B (Homo sapiens (Human)).